The following is a 557-amino-acid chain: TBCC domain-containing protein 1 (557 aa).

One can recognise a C-CAP/cofactor C-like domain in the interval 290-435; that stretch reads TTKRAKIACN…LEDHMARTGL (146 aa).

This sequence belongs to the TBCC family.

The protein localises to the cytoplasm. Its subcellular location is the cytoskeleton. The protein resides in the microtubule organizing center. It localises to the centrosome. It is found in the spindle pole. Plays a role in the regulation of centrosome and Golgi apparatus positioning, with consequences on cell shape and cell migration. This chain is TBCC domain-containing protein 1 (TBCCD1), found in Bos taurus (Bovine).